The following is a 425-amino-acid chain: Stabilizer of axonemal microtubules 4 (425 aa).

Disordered regions lie at residues 93–126 (PLEVPDGKHPLPWSMRQTSSGYGREKPSAGPPTK), 203–225 (EGSGFTKQSHQSPIVFQPPSQAL), and 316–335 (KEPTGFSLNNPMYVRSPCDP). The segment covering 207-222 (FTKQSHQSPIVFQPPS) has biased composition (polar residues).

In terms of assembly, microtubule inner protein component of sperm flagellar doublet microtubules. Interacts with PPP1CA.

It is found in the cell projection. Its subcellular location is the cilium. It localises to the cytoplasm. The protein resides in the cytoskeleton. The protein localises to the flagellum axoneme. This chain is Stabilizer of axonemal microtubules 4, found in Homo sapiens (Human).